Consider the following 174-residue polypeptide: Large ribosomal subunit protein uL5 (174 aa).

The protein belongs to the universal ribosomal protein uL5 family. Part of the 50S ribosomal subunit; contacts the 5S rRNA and probably tRNA. Forms a bridge to the 30S subunit in the 70S ribosome.

In terms of biological role, this is one of the proteins that bind and probably mediate the attachment of the 5S RNA into the large ribosomal subunit, where it forms part of the central protuberance. In the 70S ribosome it contacts protein S13 of the 30S subunit (bridge B1b), connecting the 2 subunits; this bridge is implicated in subunit movement. May contact the P site tRNA; the 5S rRNA and some of its associated proteins might help stabilize positioning of ribosome-bound tRNAs. The protein is Large ribosomal subunit protein uL5 of Halorubrum lacusprofundi (strain ATCC 49239 / DSM 5036 / JCM 8891 / ACAM 34).